A 728-amino-acid chain; its full sequence is Ankyrin repeat protein A (728 aa).

ANK repeat units follow at residues 381 to 410, 429 to 458, 477 to 506, 525 to 554, and 573 to 602; these read INLP…ETGY, NGFS…KLAA, TSSH…LLIR, YGCP…SLAQ, and ARDT…TLFN.

This sequence belongs to the Toxin_15 family.

This Escherichia coli (strain K12) protein is Ankyrin repeat protein A (arpA).